The following is a 497-amino-acid chain: Guanosine-5'-triphosphate,3'-diphosphate pyrophosphatase (497 aa).

It belongs to the GppA/Ppx family. GppA subfamily.

The enzyme catalyses guanosine 3'-diphosphate 5'-triphosphate + H2O = guanosine 3',5'-bis(diphosphate) + phosphate + H(+). The protein operates within purine metabolism; ppGpp biosynthesis; ppGpp from GTP: step 2/2. Catalyzes the conversion of pppGpp to ppGpp. Guanosine pentaphosphate (pppGpp) is a cytoplasmic signaling molecule which together with ppGpp controls the 'stringent response', an adaptive process that allows bacteria to respond to amino acid starvation, resulting in the coordinated regulation of numerous cellular activities. The sequence is that of Guanosine-5'-triphosphate,3'-diphosphate pyrophosphatase from Vibrio parahaemolyticus serotype O3:K6 (strain RIMD 2210633).